The primary structure comprises 264 residues: Thiazole synthase (264 aa).

The Schiff-base intermediate with DXP role is filled by Lys106. 1-deoxy-D-xylulose 5-phosphate is bound by residues Gly167, 193–194, and 215–216; these read AG and NS.

It belongs to the ThiG family. Homotetramer. Forms heterodimers with either ThiH or ThiS.

It is found in the cytoplasm. The catalysed reaction is [ThiS sulfur-carrier protein]-C-terminal-Gly-aminoethanethioate + 2-iminoacetate + 1-deoxy-D-xylulose 5-phosphate = [ThiS sulfur-carrier protein]-C-terminal Gly-Gly + 2-[(2R,5Z)-2-carboxy-4-methylthiazol-5(2H)-ylidene]ethyl phosphate + 2 H2O + H(+). The protein operates within cofactor biosynthesis; thiamine diphosphate biosynthesis. In terms of biological role, catalyzes the rearrangement of 1-deoxy-D-xylulose 5-phosphate (DXP) to produce the thiazole phosphate moiety of thiamine. Sulfur is provided by the thiocarboxylate moiety of the carrier protein ThiS. In vitro, sulfur can be provided by H(2)S. In Prochlorococcus marinus (strain AS9601), this protein is Thiazole synthase.